The chain runs to 269 residues: Tryptophan synthase alpha chain (269 aa).

Residues glutamate 49 and aspartate 60 each act as proton acceptor in the active site.

It belongs to the TrpA family. In terms of assembly, tetramer of two alpha and two beta chains.

It carries out the reaction (1S,2R)-1-C-(indol-3-yl)glycerol 3-phosphate + L-serine = D-glyceraldehyde 3-phosphate + L-tryptophan + H2O. It functions in the pathway amino-acid biosynthesis; L-tryptophan biosynthesis; L-tryptophan from chorismate: step 5/5. Its function is as follows. The alpha subunit is responsible for the aldol cleavage of indoleglycerol phosphate to indole and glyceraldehyde 3-phosphate. This Histophilus somni (strain 2336) (Haemophilus somnus) protein is Tryptophan synthase alpha chain.